A 230-amino-acid polypeptide reads, in one-letter code: uncharacterized protein (230 aa).

This sequence belongs to the transferase hexapeptide repeat family.

This is an uncharacterized protein from Escherichia coli O6:K15:H31 (strain 536 / UPEC).